We begin with the raw amino-acid sequence, 475 residues long: Cytosolic non-specific dipeptidase (475 aa).

Lys9 bears the N6-acetyllysine mark. Ser58 bears the Phosphoserine mark. Mn(2+) is bound at residue His99. Asp101 is an active-site residue. Mn(2+) is bound at residue Asp132. The active-site Proton acceptor is the Glu166. Residues 166–167 (EE), Asp195, His228, Thr330, Arg343, Ser417, and His445 contribute to the substrate site. Residues Glu167 and Asp195 each contribute to the Mn(2+) site. His445 contributes to the Mn(2+) binding site.

Belongs to the peptidase M20A family. In terms of assembly, homodimer. Requires Mn(2+) as cofactor.

The protein resides in the cytoplasm. The enzyme catalyses Hydrolysis of dipeptides, preferentially hydrophobic dipeptides including prolyl amino acids.. It carries out the reaction L-threonyl-L-threonine + H2O = 2 L-threonine. It catalyses the reaction L-threonyl-L-serine + H2O = L-threonine + L-serine. The catalysed reaction is L-seryl-L-threonine + H2O = L-threonine + L-serine. The enzyme catalyses L-cysteinylglycine + H2O = L-cysteine + glycine. It carries out the reaction L-alanyl-L-cysteine + H2O = L-cysteine + L-alanine. It catalyses the reaction (S)-lactate + L-phenylalanine = N-[(S)-lactoyl]-L-phenylalanine + H2O. In terms of biological role, catalyzes the peptide bond hydrolysis in dipeptides, displaying a non-redundant activity toward threonyl dipeptides. Mediates threonyl dipeptide catabolism in a tissue-specific way. Has high dipeptidase activity toward cysteinylglycine, an intermediate metabolite in glutathione metabolism. Metabolizes N-lactoyl-amino acids, both through hydrolysis to form lactic acid and amino acids, as well as through their formation by reverse proteolysis. Plays a role in the regulation of cell cycle arrest and apoptosis. In Bos taurus (Bovine), this protein is Cytosolic non-specific dipeptidase (CNDP2).